The sequence spans 241 residues: ATP synthase subunit a (241 aa).

A run of 7 helical transmembrane segments spans residues 29-49 (NSSL…LLGV), 86-106 (IPLV…GMLP), 114-134 (HVIV…IVGF), 144-164 (ILLP…IKLF), 177-197 (LAAN…FIMN), 200-220 (LILT…EVFV), and 221-241 (AILQ…DAVK).

It belongs to the ATPase A chain family. In terms of assembly, F-type ATPases have 2 components, CF(1) - the catalytic core - and CF(0) - the membrane proton channel. CF(1) has five subunits: alpha(3), beta(3), gamma(1), delta(1), epsilon(1). CF(0) has three main subunits: a(1), b(2) and c(9-12). The alpha and beta chains form an alternating ring which encloses part of the gamma chain. CF(1) is attached to CF(0) by a central stalk formed by the gamma and epsilon chains, while a peripheral stalk is formed by the delta and b chains.

It localises to the cell membrane. Key component of the proton channel; it plays a direct role in the translocation of protons across the membrane. In Wolbachia sp. subsp. Brugia malayi (strain TRS), this protein is ATP synthase subunit a.